The following is a 338-amino-acid chain: DNA-directed RNA polymerase subunit alpha (338 aa).

Positions 1-225 (MLISQRPTLT…ELFGLARELN (225 aa)) are alpha N-terminal domain (alpha-NTD). Residues 242–338 (YIAAYGMPIE…YIDTDPEETE (97 aa)) are alpha C-terminal domain (alpha-CTD). Residues 314–338 (FDPTQLDGYDAATGDYIDTDPEETE) form a disordered region.

The protein belongs to the RNA polymerase alpha chain family. As to quaternary structure, homodimer. The RNAP catalytic core consists of 2 alpha, 1 beta, 1 beta' and 1 omega subunit. When a sigma factor is associated with the core the holoenzyme is formed, which can initiate transcription.

It carries out the reaction RNA(n) + a ribonucleoside 5'-triphosphate = RNA(n+1) + diphosphate. Its function is as follows. DNA-dependent RNA polymerase catalyzes the transcription of DNA into RNA using the four ribonucleoside triphosphates as substrates. The polypeptide is DNA-directed RNA polymerase subunit alpha (Corynebacterium diphtheriae (strain ATCC 700971 / NCTC 13129 / Biotype gravis)).